The chain runs to 269 residues: Putative pyruvate, phosphate dikinase regulatory protein (269 aa).

G147–T154 serves as a coordination point for ADP.

This sequence belongs to the pyruvate, phosphate/water dikinase regulatory protein family. PDRP subfamily.

The catalysed reaction is N(tele)-phospho-L-histidyl/L-threonyl-[pyruvate, phosphate dikinase] + ADP = N(tele)-phospho-L-histidyl/O-phospho-L-threonyl-[pyruvate, phosphate dikinase] + AMP + H(+). The enzyme catalyses N(tele)-phospho-L-histidyl/O-phospho-L-threonyl-[pyruvate, phosphate dikinase] + phosphate + H(+) = N(tele)-phospho-L-histidyl/L-threonyl-[pyruvate, phosphate dikinase] + diphosphate. In terms of biological role, bifunctional serine/threonine kinase and phosphorylase involved in the regulation of the pyruvate, phosphate dikinase (PPDK) by catalyzing its phosphorylation/dephosphorylation. The chain is Putative pyruvate, phosphate dikinase regulatory protein from Trichlorobacter lovleyi (strain ATCC BAA-1151 / DSM 17278 / SZ) (Geobacter lovleyi).